The sequence spans 145 residues: Synaptojanin-2-binding protein (145 aa).

Over 1–117 (MNGRVDYLVT…GPQGEGEPSG (117 aa)) the chain is Cytoplasmic. The 88-residue stretch at 13 to 100 (EINLTRGPSG…AVSLRVQHRL (88 aa)) folds into the PDZ domain. Residues 118–138 (IPIAMVLVPVFALTMVAAWAF) form a helical; Anchor for type IV membrane protein membrane-spanning segment. Topologically, residues 139-145 (MRYRQRL) are mitochondrial intermembrane.

Binds (via the PDZ domain) to isoform 2A of SYNJ2 (via the unique motif in the C-terminus). Interacts (via C-terminus) with RALBP1. Interacts (via PDZ domain) with ACVR2A (via C-terminus) and ACVR2B (via C-terminus). Forms a ternary complex with ACVR2A and RALBP1. Interacts with MAPK12. Interacts with DLL1; enhances DLL1 protein stability, and promotes notch signaling in endothelial cells.

The protein resides in the mitochondrion outer membrane. Its subcellular location is the cytoplasm. It is found in the perinuclear region. Its function is as follows. Regulates endocytosis of activin type 2 receptor kinases through the Ral/RALBP1-dependent pathway and may be involved in suppression of activin-induced signal transduction. The polypeptide is Synaptojanin-2-binding protein (Bos taurus (Bovine)).